Consider the following 121-residue polypeptide: Large ribosomal subunit protein uL18 (121 aa).

It belongs to the universal ribosomal protein uL18 family. In terms of assembly, part of the 50S ribosomal subunit; part of the 5S rRNA/L5/L18/L25 subcomplex. Contacts the 5S and 23S rRNAs.

Its function is as follows. This is one of the proteins that bind and probably mediate the attachment of the 5S RNA into the large ribosomal subunit, where it forms part of the central protuberance. The protein is Large ribosomal subunit protein uL18 of Ureaplasma parvum serovar 3 (strain ATCC 27815 / 27 / NCTC 11736).